The sequence spans 283 residues: Cardiolipin synthase (CMP-forming) (283 aa).

3 helical membrane passes run 83–103 (PFIGLFIITNNLTPALGLFAF), 155–175 (VSIAAIILGRDVLLAISALFI), and 209–229 (LSKWNTFFQMVYLGSGVLLLL).

Belongs to the CDP-alcohol phosphatidyltransferase class-I family. As to quaternary structure, may be found in a large complex. It depends on Mg(2+) as a cofactor.

It is found in the mitochondrion inner membrane. The catalysed reaction is a CDP-1,2-diacyl-sn-glycerol + a 1,2-diacyl-sn-glycero-3-phospho-(1'-sn-glycerol) = a cardiolipin + CMP + H(+). In terms of biological role, catalyzes the synthesis of cardiolipin (CL) (diphosphatidylglycerol) by specifically transferring a phosphatidyl group from CDP-diacylglycerol to phosphatidylglycerol (PG). CL is a key phospholipid in mitochondrial membranes and plays important roles in maintaining the functional integrity and dynamics of mitochondria under both optimal and stress conditions. The sequence is that of Cardiolipin synthase (CMP-forming) (CRD1) from Saccharomyces cerevisiae (strain ATCC 204508 / S288c) (Baker's yeast).